Reading from the N-terminus, the 292-residue chain is Homoserine kinase (292 aa).

ATP is bound at residue P84 to A94.

The protein belongs to the GHMP kinase family. Homoserine kinase subfamily.

Its subcellular location is the cytoplasm. The catalysed reaction is L-homoserine + ATP = O-phospho-L-homoserine + ADP + H(+). The protein operates within amino-acid biosynthesis; L-threonine biosynthesis; L-threonine from L-aspartate: step 4/5. Functionally, catalyzes the ATP-dependent phosphorylation of L-homoserine to L-homoserine phosphate. The protein is Homoserine kinase of Campylobacter jejuni subsp. doylei (strain ATCC BAA-1458 / RM4099 / 269.97).